The primary structure comprises 229 residues: Dihydrofolate reductase (229 aa).

The region spanning 11-227 (SITAVVAATA…VKYIFEMWVL (217 aa)) is the DHFR domain. NADP(+) contacts are provided by residues alanine 17 and 23–29 (GIGLNGG). Residue 37–42 (EMKYFA) coordinates substrate. NADP(+) is bound at residue 64–66 (RKT). Arginine 80 serves as a coordination point for substrate. NADP(+) contacts are provided by residues 86–88 (SGK) and 127–134 (GGATLYTS).

The protein belongs to the dihydrofolate reductase family. In terms of assembly, monomer.

It catalyses the reaction (6S)-5,6,7,8-tetrahydrofolate + NADP(+) = 7,8-dihydrofolate + NADPH + H(+). The protein operates within cofactor biosynthesis; tetrahydrofolate biosynthesis; 5,6,7,8-tetrahydrofolate from 7,8-dihydrofolate: step 1/1. In terms of biological role, key enzyme in folate metabolism. Catalyzes an essential reaction for de novo glycine and purine synthesis, and for DNA precursor synthesis. This chain is Dihydrofolate reductase (DFR1), found in Cryptococcus neoformans var. neoformans serotype D (strain JEC21 / ATCC MYA-565) (Filobasidiella neoformans).